Consider the following 692-residue polypeptide: Protein arginine N-methyltransferase 7 (692 aa).

2 SAM-dependent MTase PRMT-type domains span residues 14–359 and 368–692; these read ENSW…YSLW and AKTV…QEKR.

This sequence belongs to the class I-like SAM-binding methyltransferase superfamily. Protein arginine N-methyltransferase family. PRMT7 subfamily.

Functionally, essential arginine methyltransferase that can both catalyze the formation of omega-N monomethylarginine (MMA) and symmetrical dimethylarginine (sDMA). Specifically mediates the symmetrical dimethylation of arginine residues in the small nuclear ribonucleoproteins SmD1 and SmD3. The polypeptide is Protein arginine N-methyltransferase 7 (Art7) (Drosophila pseudoobscura pseudoobscura (Fruit fly)).